The sequence spans 251 residues: Cell division protein ZapD (251 aa).

Belongs to the ZapD family. As to quaternary structure, interacts with FtsZ.

It is found in the cytoplasm. In terms of biological role, cell division factor that enhances FtsZ-ring assembly. Directly interacts with FtsZ and promotes bundling of FtsZ protofilaments, with a reduction in FtsZ GTPase activity. The chain is Cell division protein ZapD from Azoarcus sp. (strain BH72).